We begin with the raw amino-acid sequence, 364 residues long: Aminomethyltransferase (364 aa).

Belongs to the GcvT family. In terms of assembly, the glycine cleavage system is composed of four proteins: P, T, L and H.

The enzyme catalyses N(6)-[(R)-S(8)-aminomethyldihydrolipoyl]-L-lysyl-[protein] + (6S)-5,6,7,8-tetrahydrofolate = N(6)-[(R)-dihydrolipoyl]-L-lysyl-[protein] + (6R)-5,10-methylene-5,6,7,8-tetrahydrofolate + NH4(+). In terms of biological role, the glycine cleavage system catalyzes the degradation of glycine. This is Aminomethyltransferase from Klebsiella pneumoniae subsp. pneumoniae (strain ATCC 700721 / MGH 78578).